Reading from the N-terminus, the 312-residue chain is Aspartoacylase (312 aa).

Zn(2+)-binding residues include His-20 and Glu-23. Arg-62, Asn-69, and Arg-70 together coordinate N-acetyl-L-aspartate. His-115 contributes to the Zn(2+) binding site. Positions 163 and 167 each coordinate N-acetyl-L-aspartate. The active-site Proton donor/acceptor is the Glu-177. Tyr-287 is a binding site for N-acetyl-L-aspartate.

Belongs to the AspA/AstE family. Aspartoacylase subfamily. In terms of assembly, homodimer. Zn(2+) is required as a cofactor. In terms of tissue distribution, detected in kidney proximal tubule cells (at protein level).

The protein localises to the cytoplasm. It is found in the nucleus. The catalysed reaction is an N-acyl-L-aspartate + H2O = a carboxylate + L-aspartate. It carries out the reaction N-acetyl-L-aspartate + H2O = L-aspartate + acetate. In terms of biological role, catalyzes the deacetylation of N-acetylaspartic acid (NAA) to produce acetate and L-aspartate. NAA occurs in high concentration in brain and its hydrolysis NAA plays a significant part in the maintenance of intact white matter. In other tissues it acts as a scavenger of NAA from body fluids. This chain is Aspartoacylase, found in Rattus norvegicus (Rat).